Here is a 250-residue protein sequence, read N- to C-terminus: uncharacterized protein (250 aa).

Positions 1–25 (MKTLRTLCVLMILSGVIFFGLKIDA) are cleaved as a signal peptide.

This is an uncharacterized protein from Bacillus subtilis (strain 168).